An 878-amino-acid polypeptide reads, in one-letter code: Phosphoenolpyruvate carboxylase (878 aa).

Residues His-140 and Lys-545 contribute to the active site.

It belongs to the PEPCase type 1 family. The cofactor is Mg(2+).

It carries out the reaction oxaloacetate + phosphate = phosphoenolpyruvate + hydrogencarbonate. Forms oxaloacetate, a four-carbon dicarboxylic acid source for the tricarboxylic acid cycle. The chain is Phosphoenolpyruvate carboxylase from Pseudomonas paraeruginosa (strain DSM 24068 / PA7) (Pseudomonas aeruginosa (strain PA7)).